We begin with the raw amino-acid sequence, 470 residues long: 1-aminocyclopropane-1-carboxylate synthase 5 (470 aa).

Substrate is bound by residues E47 and Y85. K272 carries the post-translational modification N6-(pyridoxal phosphate)lysine. At S461 the chain carries Phosphoserine.

This sequence belongs to the class-I pyridoxal-phosphate-dependent aminotransferase family. In terms of assembly, homodimer and heterodimer. In vivo, the relevance of heterodimerization with other ACS enzymes is however unsure. Interacts (via its C-terminal region) with FEI1, FEI2, ETO1, EOL1 and EOL2. Interacts with GRF3. Pyridoxal 5'-phosphate is required as a cofactor. In terms of processing, may be processed at its C-terminus. Ubiquitinated. The interaction with ETO1 (and possibly EOL1 and EOL2) mediate its proteasome-dependent degradation. Its stability and degradation plays a central role in ethylene biosynthesis. As to expression, expressed in roots and siliques.

The catalysed reaction is S-adenosyl-L-methionine = 1-aminocyclopropane-1-carboxylate + S-methyl-5'-thioadenosine + H(+). It participates in alkene biosynthesis; ethylene biosynthesis via S-adenosyl-L-methionine; ethylene from S-adenosyl-L-methionine: step 1/2. Its function is as follows. 1-aminocyclopropane-1-carboxylate synthase (ACS) enzymes catalyze the conversion of S-adenosyl-L-methionine (SAM) into 1-aminocyclopropane-1-carboxylate (ACC), a direct precursor of ethylene. In Arabidopsis thaliana (Mouse-ear cress), this protein is 1-aminocyclopropane-1-carboxylate synthase 5 (ACS5).